A 210-amino-acid polypeptide reads, in one-letter code: Uracil phosphoribosyltransferase (210 aa).

5-phospho-alpha-D-ribose 1-diphosphate-binding positions include Arg-78, Arg-103, and 130–138 (DPMLATGGT). Residues Ile-193 and 198 to 200 (GDA) contribute to the uracil site. Asp-199 contributes to the 5-phospho-alpha-D-ribose 1-diphosphate binding site.

This sequence belongs to the UPRTase family. Mg(2+) serves as cofactor.

The enzyme catalyses UMP + diphosphate = 5-phospho-alpha-D-ribose 1-diphosphate + uracil. Its pathway is pyrimidine metabolism; UMP biosynthesis via salvage pathway; UMP from uracil: step 1/1. Its activity is regulated as follows. Allosterically activated by GTP. Catalyzes the conversion of uracil and 5-phospho-alpha-D-ribose 1-diphosphate (PRPP) to UMP and diphosphate. This chain is Uracil phosphoribosyltransferase, found in Xanthomonas euvesicatoria pv. vesicatoria (strain 85-10) (Xanthomonas campestris pv. vesicatoria).